Reading from the N-terminus, the 648-residue chain is Outer capsid protein VP4 (648 aa).

G2 is lipidated: N-myristoyl glycine; by host. N-linked (GlcNAc...) asparagine; by host glycosylation is found at N12, N311, N312, N390, N453, and N492.

This sequence belongs to the aquareoviridae outer capsid VP4 protein family. Interacts with VP6 and VP7. Cleaved during the endosomal proteolytic disassembly of the outer capsid. Post-translationally, N-terminally myristoylated. This acylation is essential for the membrane fusion activity.

It is found in the virion. In terms of biological role, interacts with VP7 to form the outer icosahedral capsid with an incomplete T=13 symmetry, about 80 nm in diameter, and consisting of 200 VP4-VP7 trimers. Myristoylated N-terminal peptide may be released in the endosome and involved in permeabilization and delivery of transcriptionally active viral particles into the host cell cytoplasm (Potential). The chain is Outer capsid protein VP4 (S6) from Notemigonus crysoleucas (Golden shiner).